Consider the following 359-residue polypeptide: MAVNFKFSLLTITIVVNILVYCNASAIKFDVDLEKVPSNAVACPAAEDIAPCTCKVGEGDVMDMDCSKVTSDAELASIFSKTFPSNTFRELFIEFNREITTLTADSLGAATFTKIAITSCTQLKTIEENAFMASAATLEKLVLLKNDLSSFPFEEMSQYTKLNWLELSVNSITGWPALSSDTLANLILFRNPIGNIPVDAFQTLPNIEQFNCFDCSITEVEAGTFTRSPKLQKLVLGYNGLTSLPVGAIKLHGHGPTTSNLGITNNQIISFPEGAVEGIQGILGIDFNRVTSLSEEVWRPILENLFQFSLLNNPLACVCDVMWLIDSPELLAKIKGNPRCAGGKRLKNLDPAVFHAMCQ.

The N-terminal stretch at 1–39 (MAVNFKFSLLTITIVVNILVYCNASAIKFDVDLEKVPSN) is a signal peptide. LRR repeat units follow at residues 135–158 (AATLEKLVLLKNDLSSFPFEEMSQ), 160–180 (TKLNWLELSVNSITGWPALSS), 181–203 (DTLANLILFRNPIGNIPVDAFQT), 228–251 (SPKLQKLVLGYNGLTSLPVGAIKL), 255–278 (GPTTSNLGITNNQIISFPEGAVEG), 280–300 (QGILGIDFNRVTSLSEEVWRP), 302–325 (LENLFQFSLLNNPLACVCDVMWLI), and 331–356 (LAKIKGNPRCAGGKRLKNLDPAVFHA).

As to quaternary structure, heterotetramer of a catalytic 19 kDa and a non-catalytic 35 kDa subunit.

It is found in the secreted. Functionally, non-catalytic subunit of oplophorus-luciferin 2-monooxygenase. May stabilize the active conformation of the catalytic subunit. In Oplophorus gracilirostris (Luminous shrimp), this protein is Oplophorus-luciferin 2-monooxygenase non-catalytic subunit.